Consider the following 447-residue polypeptide: Argininosuccinate synthase (447 aa).

Residues 17-25 (AFSGGLDTS) and Ala43 contribute to the ATP site. Residue Tyr99 participates in L-citrulline binding. Residues Gly129 and Thr131 each contribute to the ATP site. Residues Thr131, Asn135, and Asp136 each coordinate L-aspartate. L-citrulline is bound at residue Asn135. Asp136 contacts ATP. L-citrulline-binding residues include Arg139 and Ser192. Position 194 (Asp194) interacts with ATP. Residues Thr201, Glu203, and Glu280 each contribute to the L-citrulline site.

Belongs to the argininosuccinate synthase family. Type 2 subfamily. In terms of assembly, homotetramer.

The protein resides in the cytoplasm. The catalysed reaction is L-citrulline + L-aspartate + ATP = 2-(N(omega)-L-arginino)succinate + AMP + diphosphate + H(+). It participates in amino-acid biosynthesis; L-arginine biosynthesis; L-arginine from L-ornithine and carbamoyl phosphate: step 2/3. The chain is Argininosuccinate synthase from Salmonella agona (strain SL483).